The chain runs to 483 residues: Beta-glucosidase 4 (483 aa).

A beta-D-glucoside contacts are provided by residues Q29, H131, 176–177, Y310, and E380; that span reads NE. The Proton donor role is filled by E177. E380 (nucleophile) is an active-site residue. A glycan (N-linked (GlcNAc...) asparagine) is linked at N398. Residues W429, 436–437, and F445 contribute to the a beta-D-glucoside site; that span reads EW.

The protein belongs to the glycosyl hydrolase 1 family.

The enzyme catalyses Hydrolysis of terminal, non-reducing beta-D-glucosyl residues with release of beta-D-glucose.. The protein is Beta-glucosidase 4 (BGLU4) of Oryza sativa subsp. japonica (Rice).